Reading from the N-terminus, the 265-residue chain is Apolipoprotein A-I (265 aa).

Positions 1–18 are cleaved as a signal peptide; that stretch reads MKALVLTLAVLFFTGSQA. Repeat copies occupy residues 67–88 and 89–110. A 10 X approximate tandem repeats region spans residues 67–265; that stretch reads LKLLDNWDSL…DEASKKLNAQ (199 aa). Residue methionine 109 is modified to Methionine sulfoxide. Residues 111–121 form a 3; half-length repeat; it reads KDLEEVKQKVQ. 5 tandem repeats follow at residues 122–142, 144–165, 166–187, 188–209, and 210–230. The stretch at 231–241 is one 9; half-length repeat; sequence PALEDLRQGLL. Repeat 10 spans residues 242–265; the sequence is PVLESLKVSILAAIDEASKKLNAQ.

It belongs to the apolipoprotein A1/A4/E family. As to quaternary structure, homodimer. Interacts with APOA1BP and CLU. Component of a sperm activating protein complex (SPAP), consisting of APOA1, an immunoglobulin heavy chain, an immunoglobulin light chain and albumin. Interacts with NDRG1. Interacts with SCGB3A2. Interacts with NAXE and YJEFN3. In terms of processing, glycosylated. Palmitoylated. Post-translationally, phosphorylation sites are present in the extracellular medium. In terms of tissue distribution, major protein of plasma HDL, also found in chylomicrons.

It localises to the secreted. Its function is as follows. Participates in the reverse transport of cholesterol from tissues to the liver for excretion by promoting cholesterol efflux from tissues and by acting as a cofactor for the lecithin cholesterol acyltransferase (LCAT). As part of the SPAP complex, activates spermatozoa motility. This Physeter macrocephalus (Sperm whale) protein is Apolipoprotein A-I (APOA1).